The chain runs to 389 residues: Lipid-A-disaccharide synthase (389 aa).

Belongs to the LpxB family.

It carries out the reaction a lipid X + a UDP-2-N,3-O-bis[(3R)-3-hydroxyacyl]-alpha-D-glucosamine = a lipid A disaccharide + UDP + H(+). The protein operates within bacterial outer membrane biogenesis; LPS lipid A biosynthesis. In terms of biological role, condensation of UDP-2,3-diacylglucosamine and 2,3-diacylglucosamine-1-phosphate to form lipid A disaccharide, a precursor of lipid A, a phosphorylated glycolipid that anchors the lipopolysaccharide to the outer membrane of the cell. The protein is Lipid-A-disaccharide synthase of Paraburkholderia phytofirmans (strain DSM 17436 / LMG 22146 / PsJN) (Burkholderia phytofirmans).